Reading from the N-terminus, the 635-residue chain is Threonine--tRNA ligase (635 aa).

A TGS domain is found at 1–61 (MPVIRLPDGS…TDDADLSIIT (61 aa)). The tract at residues 242–533 (DHRKLGRQLD…LIENYAGAMP (292 aa)) is catalytic. Positions 333, 384, and 510 each coordinate Zn(2+).

This sequence belongs to the class-II aminoacyl-tRNA synthetase family. In terms of assembly, homodimer. The cofactor is Zn(2+).

It localises to the cytoplasm. It carries out the reaction tRNA(Thr) + L-threonine + ATP = L-threonyl-tRNA(Thr) + AMP + diphosphate + H(+). Catalyzes the attachment of threonine to tRNA(Thr) in a two-step reaction: L-threonine is first activated by ATP to form Thr-AMP and then transferred to the acceptor end of tRNA(Thr). Also edits incorrectly charged L-seryl-tRNA(Thr). This is Threonine--tRNA ligase from Methylobacillus flagellatus (strain ATCC 51484 / DSM 6875 / VKM B-1610 / KT).